Reading from the N-terminus, the 139-residue chain is MTERTLVLIKPDAVARGYVGEILSRIERKGLTIAALELRVASEEVAGSHYAEHAERPFYPSLLEFITSGPLVAAVLEGPRAIAAFRQLAGGTDPVDKALPGTIRGDFGLEAQQNLVHGSDSVESAEREIALWFPALSSI.

The ATP site is built by lysine 10, phenylalanine 58, arginine 86, threonine 92, arginine 104, and asparagine 114. Histidine 117 functions as the Pros-phosphohistidine intermediate in the catalytic mechanism.

It belongs to the NDK family. In terms of assembly, homotetramer. The cofactor is Mg(2+).

The protein localises to the cytoplasm. The catalysed reaction is a 2'-deoxyribonucleoside 5'-diphosphate + ATP = a 2'-deoxyribonucleoside 5'-triphosphate + ADP. The enzyme catalyses a ribonucleoside 5'-diphosphate + ATP = a ribonucleoside 5'-triphosphate + ADP. In terms of biological role, major role in the synthesis of nucleoside triphosphates other than ATP. The ATP gamma phosphate is transferred to the NDP beta phosphate via a ping-pong mechanism, using a phosphorylated active-site intermediate. In Rhodococcus erythropolis (strain PR4 / NBRC 100887), this protein is Nucleoside diphosphate kinase.